Reading from the N-terminus, the 714-residue chain is MSVNDQITHIGKTLSTTASAFLNYQKSNSNTQDVLTNNGPYKNLLSNTVNNASSTSYFYKRTEHGRFVKNASNTFEDIYSKTRRGDVFRNKFTDNKTCFRMLTYISDDLLNEIPTKEGLKSDADGKLLTEGGENENLRKNASKKETSLFQGFKSYLPIAELAIENTERLNYDTNGTSGTVGAKDVMSKTNERDEIHTELPNFQDSFLIPPGVETKKISSSYSPSALKSFSQTLVNSLEFLNIQKNSTLSEIRDIEVEVENLRQKKEKLLGKIANIEQNQLLLEDNLKQIDDRLDFLEEYGLEVIEANSDENAEDDGMSERKALKNDAIRNEGVTTESISSEASNLPPRRRQQLRDDNSLNRLGAFYSKSKKRHRKSFPTFQQLYEPGTKIGSIMSTHDDFLTCLDFDAPFGTLCTAGYLDHTVKIWDLSKQNKIGELAGHLATINCMQINRDYGTLVTGGRDAALKLWNLNLAQQLYQETQNLTSPTNHIDSPCVYTFEAHTDEVTALSLDPSFLVSGSQDRTIRQWDLRSGKCLQTIDLSFANVLTTSTNVDLSKSTLLTQRNERPSIGALQSFDAALATGTKDGVVRLWDLRSGKVIRTLKGHTDAITSLKFDSACLVTGSYDRTVRIWDLRTGLLNKFHAYSAPVLSLDLFQENAAVVVADEPSVQIYDSEKDESWSCVEQGNETSVSTVKYKENYMVEGRENGDVNIWAV.

Residues 240-298 (LNIQKNSTLSEIRDIEVEVENLRQKKEKLLGKIANIEQNQLLLEDNLKQIDDRLDFLEE) are a coiled coil. A disordered region spans residues 323–354 (LKNDAIRNEGVTTESISSEASNLPPRRRQQLR). Residues 332–343 (GVTTESISSEAS) are compositionally biased toward polar residues. Residue serine 376 is modified to Phosphoserine. WD repeat units follow at residues 396 to 436 (THDD…KIGE), 439 to 478 (GHLA…QLYQ), 500 to 539 (AHTD…QTID), 561 to 603 (TQRN…RTLK), 604 to 642 (GHTD…NKFH), 644 to 681 (YSAP…SWSC), and 685 to 714 (GNET…IWAV).

The protein belongs to the WD repeat MDV1/CAF4 family. As to quaternary structure, interacts with CAF4, DNM1 and FIS1, components of the mitochondrial fission machinery. Interacts via its N-terminal, coiled-coil extension (NTE) with FIS1, and via its WD repeats with DNM1.

It is found in the mitochondrion outer membrane. In terms of biological role, involved in mitochondrial fission. Has a partially redundant function to CAF4 in acting as an adapter protein, binding to FIS1 on the mitochondrial outer membrane and recruiting the dynamin-like GTPase DNM1 to form mitochondrial fission complexes. Formation of these complexes is required to promote constriction and fission of the mitochondrial compartment at a late step in mitochondrial division. The sequence is that of Mitochondrial division protein 1 (MDV1) from Saccharomyces cerevisiae (strain YJM789) (Baker's yeast).